The chain runs to 448 residues: Exodeoxyribonuclease 7 large subunit (448 aa).

This sequence belongs to the XseA family. As to quaternary structure, heterooligomer composed of large and small subunits.

Its subcellular location is the cytoplasm. The catalysed reaction is Exonucleolytic cleavage in either 5'- to 3'- or 3'- to 5'-direction to yield nucleoside 5'-phosphates.. In terms of biological role, bidirectionally degrades single-stranded DNA into large acid-insoluble oligonucleotides, which are then degraded further into small acid-soluble oligonucleotides. In Shewanella baltica (strain OS155 / ATCC BAA-1091), this protein is Exodeoxyribonuclease 7 large subunit.